The chain runs to 257 residues: UPF0246 protein Daro_2893 (257 aa).

The protein belongs to the UPF0246 family.

The protein is UPF0246 protein Daro_2893 of Dechloromonas aromatica (strain RCB).